The sequence spans 1512 residues: MSSLLNSLLPEYFKPKTNLNINSSRVQYGFNARIDMQYEDDSGTRKGSRPNAFMSNTVAFIGNYEGIIVDDIPILDGLRADIFDTHGDLDMGLVEDALSKSTMIRRNVPTYTAYASELLYKRNLTSLFYNMLRLYYIKKWGSIKYEKDAIFYDNGHACLLNRQLFPKSRDASLESSLSLPEAEIAMLDPGLEFPEEDVPAILWHGRVSSRATCILGQACSEFAPLAPFSIAHYSPQLTRKLFVNAPAGIEPSSGRYTHEDVKDAITILVSANQAYTDFEAAYLMLAQTLVSPVPRTAEASAWFINAGMVNMPTLSCANGYYPALTNVNPYHRLDTWKDTLNHWVAYPDMLFYHSVAMIESCYVELGNVARVSDSDAINKYTFTELSVQGRPVMNRGIIVDLTLVAMRTGREISLPYPVSCGLTRTDALLQGTEIHVPVVVKDIDMPQYYNAIDKDVIEGQETVIKVKQLPPAMYPIYTYGINTTEFYSDHFEDQVQVEMAPIDNGKAVFNDARKFSKFMSIMRMMGNDVTATDLVTGRKVSNWADNSSGRFLYTDVKYEGQTAFLVDMDTVKARDHCWVSIVDPNGTMNLSYKMTNFRAAMFSRNKPLYMTGGSVRTIATGNYRDAAERLRAMDETLRLKPFKITEKLDFSCSSLRDTKFVGQQYAILTPSGTTTDIRSGRGTNQSYRRGRTSTGYRIGVEDDEDLDIGTVKYIVPLYLNGDNVAQNCLEATHVLIKACSIANRIVDDGEGHCFTQQGLAQQWIFHRGEMIFVKAVRIGQLNAYYVDYKNVTNYSLKTAAQVGATISNNLRHGFVDNQQDAYTRLVANYSDTRKWIRDNFTYNYNMEKEKYRITQYHHTHVRLKDLFPSRKIVKLEGYEALLAMMLDRFNNIESTHVTFFTYLRALPDREKEVFISLVLNYNGLGREWLKSEGVRAKQAQGTVKYDMSKLFELNVLENGVDEEVDWEKEKRNRSDIKTVNISYAKVLEHCRELFIMARAEGKRPMRMKWQEYWRQRAVIMPGGSVHSQHPVEQDVIRVLPREIRSKKGVASVMPYKEQKYFTSRRPEIHAYTSTKYEWGKVRALYGCDFSSHTMADFGLLQCEDTFPGFVPTGSYANEDYVRTRIAGTHSLIPFCYDFDDFNSQHSKEAMQAVIDAWISVYHDKLTDDQIEAAKWTRNSVDRMVAHQPNTGETYDVKGTLFSGWRLTTFFNTALNYCYLANAGINSLVPTSLHNGDDVFAGIRTIADGISLIKNAAATGVRANTTKMNIGTIAEFLRVDMRAKNSTGSQYLTRGIATFTHSRVESDAPLTLRNLVSAYKTRYDEILARGASIDNMKPLYRKQLFFARKLFNVEKDIVDNLITMDISCGGLQEKGRVSEMVLQEVDIENIDSYRKTRMIAKLIDKGVGDYTAFLKTNFSEIADAITRETRVESVTKAYNVKKKTVVRAFRDLSAAYHERAVRHAWKGMSGLHIVNRIRMGVSNLVMVVSKINPAKANVLAKSGDPTKWLAVLT.

It belongs to the totiviridae RNA-directed RNA polymerase family.

It catalyses the reaction RNA(n) + a ribonucleoside 5'-triphosphate = RNA(n+1) + diphosphate. In terms of biological role, RNA-dependent RNA polymerase which replicates the viral genome. Catalyzes the transcription of fully conservative plus-strand genomic RNAs that are extruded from the virion into the cytoplasm where they function as mRNAs for translation of viral proteins and also as substrates for encapsidation to form new virions. Once encapsidated, the positive strand is converted to dsRNA by the RNA-directed RNA polymerase. The protein is Probable RNA-directed RNA polymerase (gag-pol) of Saccharomyces cerevisiae virus L-BC (ScV-L-BC).